Reading from the N-terminus, the 82-residue chain is ATP synthase subunit c, chloroplastic (82 aa).

A run of 2 helical transmembrane segments spans residues 7-27 (AASV…PGIG) and 57-77 (LAFM…LLFA).

This sequence belongs to the ATPase C chain family. In terms of assembly, F-type ATPases have 2 components, F(1) - the catalytic core - and F(0) - the membrane proton channel. F(1) has five subunits: alpha(3), beta(3), gamma(1), delta(1), epsilon(1). F(0) has four main subunits: a(1), b(1), b'(1) and c(10-14). The alpha and beta chains form an alternating ring which encloses part of the gamma chain. F(1) is attached to F(0) by a central stalk formed by the gamma and epsilon chains, while a peripheral stalk is formed by the delta, b and b' chains.

Its subcellular location is the plastid. It is found in the chloroplast thylakoid membrane. F(1)F(0) ATP synthase produces ATP from ADP in the presence of a proton or sodium gradient. F-type ATPases consist of two structural domains, F(1) containing the extramembraneous catalytic core and F(0) containing the membrane proton channel, linked together by a central stalk and a peripheral stalk. During catalysis, ATP synthesis in the catalytic domain of F(1) is coupled via a rotary mechanism of the central stalk subunits to proton translocation. Functionally, key component of the F(0) channel; it plays a direct role in translocation across the membrane. A homomeric c-ring of between 10-14 subunits forms the central stalk rotor element with the F(1) delta and epsilon subunits. This Guillardia theta (Cryptophyte) protein is ATP synthase subunit c, chloroplastic.